A 414-amino-acid polypeptide reads, in one-letter code: Isocitrate dehydrogenase [NADP] cytoplasmic (414 aa).

The residue at position 2 (S2) is an N-acetylserine. The residue at position 42 (Y42) is a Phosphotyrosine. An NADP(+)-binding site is contributed by T75–T77. Position 77 (T77) interacts with substrate. K81 carries the post-translational modification N6-acetyllysine. R82 is a binding site for NADP(+). Substrate contacts are provided by residues S94–R100 and R109. At K126 the chain carries N6-succinyllysine. Residues R132 and K212 each coordinate substrate. An N6-acetyllysine mark is found at K224 and K233. D252 contributes to the Mn(2+) binding site. An NADP(+)-binding site is contributed by K260. Residues D275 and D279 each coordinate Mn(2+). G310 to H315 contributes to the NADP(+) binding site. At K321 the chain carries N6-acetyllysine. Residue N328 coordinates NADP(+). The residue at position 389 (S389) is a Phosphoserine. K400 carries the post-translational modification N6-succinyllysine.

Belongs to the isocitrate and isopropylmalate dehydrogenases family. Homodimer. Mg(2+) is required as a cofactor. Requires Mn(2+) as cofactor. Acetylation at Lys-374 dramatically reduces catalytic activity. As to expression, expressed preferentially in corneal epithelium. Constitute approximately 13% of the total soluble bovine corneal epithelial proteins.

It localises to the cytoplasm. The protein localises to the cytosol. It carries out the reaction D-threo-isocitrate + NADP(+) = 2-oxoglutarate + CO2 + NADPH. Functionally, catalyzes the NADP(+)-dependent oxidative decarboxylation of isocitrate (D-threo-isocitrate) to 2-ketoglutarate (2-oxoglutarate), which is required by other enzymes such as the phytanoyl-CoA dioxygenase. Plays a critical role in the generation of NADPH, an important cofactor in many biosynthesis pathways. May act as a corneal epithelial crystallin and may be involved in maintaining corneal epithelial transparency. This Bos taurus (Bovine) protein is Isocitrate dehydrogenase [NADP] cytoplasmic (IDH1).